A 628-amino-acid polypeptide reads, in one-letter code: U-box domain-containing protein 10 (628 aa).

In terms of domain architecture, U-box spans 242–316 (TIPEDFLCPI…SQWCTKHNIE (75 aa)). ARM repeat units follow at residues 373-413 (TDNR…NLSI), 415-454 (EHNK…SLSL), 456-495 (DENK…NLCI), 497-537 (QGNK…VLAS), and 539-578 (QVAK…CLCK).

The enzyme catalyses S-ubiquitinyl-[E2 ubiquitin-conjugating enzyme]-L-cysteine + [acceptor protein]-L-lysine = [E2 ubiquitin-conjugating enzyme]-L-cysteine + N(6)-ubiquitinyl-[acceptor protein]-L-lysine.. Its pathway is protein modification; protein ubiquitination. Functions as an E3 ubiquitin ligase. The sequence is that of U-box domain-containing protein 10 (PUB10) from Arabidopsis thaliana (Mouse-ear cress).